The following is a 464-amino-acid chain: Soluble pyridine nucleotide transhydrogenase (464 aa).

FAD is bound at residue 35-44 (DNRPLVGGNC).

The protein belongs to the class-I pyridine nucleotide-disulfide oxidoreductase family. Requires FAD as cofactor.

It localises to the cytoplasm. It catalyses the reaction NAD(+) + NADPH = NADH + NADP(+). Functionally, conversion of NADPH, generated by peripheral catabolic pathways, to NADH, which can enter the respiratory chain for energy generation. The chain is Soluble pyridine nucleotide transhydrogenase from Ectopseudomonas mendocina (strain ymp) (Pseudomonas mendocina).